Reading from the N-terminus, the 100-residue chain is Urease subunit gamma (100 aa).

This sequence belongs to the urease gamma subunit family. As to quaternary structure, heterotrimer of UreA (gamma), UreB (beta) and UreC (alpha) subunits. Three heterotrimers associate to form the active enzyme.

It localises to the cytoplasm. The enzyme catalyses urea + 2 H2O + H(+) = hydrogencarbonate + 2 NH4(+). Its pathway is nitrogen metabolism; urea degradation; CO(2) and NH(3) from urea (urease route): step 1/1. This chain is Urease subunit gamma, found in Shewanella halifaxensis (strain HAW-EB4).